The following is a 160-amino-acid chain: NADH-quinone oxidoreductase subunit B (160 aa).

C39, C40, C104, and C135 together coordinate [4Fe-4S] cluster.

This sequence belongs to the complex I 20 kDa subunit family. As to quaternary structure, NDH-1 is composed of 14 different subunits. Subunits NuoB, C, D, E, F, and G constitute the peripheral sector of the complex. It depends on [4Fe-4S] cluster as a cofactor.

Its subcellular location is the cell membrane. The enzyme catalyses a quinone + NADH + 5 H(+)(in) = a quinol + NAD(+) + 4 H(+)(out). Functionally, NDH-1 shuttles electrons from NADH, via FMN and iron-sulfur (Fe-S) centers, to quinones in the respiratory chain. The immediate electron acceptor for the enzyme in this species is believed to be a menaquinone. Couples the redox reaction to proton translocation (for every two electrons transferred, four hydrogen ions are translocated across the cytoplasmic membrane), and thus conserves the redox energy in a proton gradient. This Amoebophilus asiaticus (strain 5a2) protein is NADH-quinone oxidoreductase subunit B.